A 356-amino-acid chain; its full sequence is tRNA N6-adenosine threonylcarbamoyltransferase (356 aa).

Fe cation-binding residues include His-115 and His-119. Substrate is bound by residues 138 to 142 (LVSGG), Asp-171, Gly-184, and Asn-277. Asp-305 is a binding site for Fe cation.

This sequence belongs to the KAE1 / TsaD family. It depends on Fe(2+) as a cofactor.

It localises to the cytoplasm. The enzyme catalyses L-threonylcarbamoyladenylate + adenosine(37) in tRNA = N(6)-L-threonylcarbamoyladenosine(37) in tRNA + AMP + H(+). In terms of biological role, required for the formation of a threonylcarbamoyl group on adenosine at position 37 (t(6)A37) in tRNAs that read codons beginning with adenine. Is involved in the transfer of the threonylcarbamoyl moiety of threonylcarbamoyl-AMP (TC-AMP) to the N6 group of A37, together with TsaE and TsaB. TsaD likely plays a direct catalytic role in this reaction. This Polaromonas naphthalenivorans (strain CJ2) protein is tRNA N6-adenosine threonylcarbamoyltransferase.